The following is a 376-amino-acid chain: Cytochrome b (376 aa).

Transmembrane regions (helical) follow at residues 28-48, 72-94, 107-127, and 169-189; these read YGFL…FLAS, WCFR…LHIL, SWIS…VGYV, and FFVL…IHIF. 2 residues coordinate heme b: H78 and H92. Heme b-binding residues include H173 and H187. H192 provides a ligand contact to a ubiquinone. 4 helical membrane-spanning segments follow: residues 214 to 234, 274 to 294, 317 to 337, and 340 to 360; these read LLSL…IQSL, VPSK…LFLL, VPII…CQLP, and IFIL…LFVL.

Belongs to the cytochrome b family. The main subunits of complex b-c1 are: cytochrome b, cytochrome c1 and the Rieske protein. Heme b is required as a cofactor.

The protein resides in the mitochondrion inner membrane. Component of the ubiquinol-cytochrome c reductase complex (complex III or cytochrome b-c1 complex) that is part of the mitochondrial respiratory chain. The b-c1 complex mediates electron transfer from ubiquinol to cytochrome c. Contributes to the generation of a proton gradient across the mitochondrial membrane that is then used for ATP synthesis. This chain is Cytochrome b (MT-CYB), found in Plasmodium falciparum.